The primary structure comprises 104 residues: Flagellar hook-basal body complex protein FliE (104 aa).

Belongs to the FliE family.

Its subcellular location is the bacterial flagellum basal body. The chain is Flagellar hook-basal body complex protein FliE from Salmonella arizonae (strain ATCC BAA-731 / CDC346-86 / RSK2980).